We begin with the raw amino-acid sequence, 119 residues long: Acidic phospholipase A2 CM-II (119 aa).

7 disulfide bridges follow: C11–C71, C26–C118, C28–C44, C43–C99, C50–C92, C60–C85, and C78–C90. F27, G29, and G31 together coordinate Ca(2+). Residue H47 is part of the active site. D48 lines the Ca(2+) pocket. D93 is an active-site residue.

The protein belongs to the phospholipase A2 family. Group I subfamily. D49 sub-subfamily. Requires Ca(2+) as cofactor. As to expression, expressed by the venom gland.

Its subcellular location is the secreted. The enzyme catalyses a 1,2-diacyl-sn-glycero-3-phosphocholine + H2O = a 1-acyl-sn-glycero-3-phosphocholine + a fatty acid + H(+). PLA2 catalyzes the calcium-dependent hydrolysis of the 2-acyl groups in 3-sn-phosphoglycerides. The protein is Acidic phospholipase A2 CM-II of Aspidelaps scutatus (Shield-nose snake).